Consider the following 620-residue polypeptide: Chaperone protein HscA homolog (620 aa).

It belongs to the heat shock protein 70 family.

Functionally, chaperone involved in the maturation of iron-sulfur cluster-containing proteins. Has a low intrinsic ATPase activity which is markedly stimulated by HscB. In Herminiimonas arsenicoxydans, this protein is Chaperone protein HscA homolog.